A 447-amino-acid chain; its full sequence is Phosphoglucosamine mutase (447 aa).

Catalysis depends on Ser-100, which acts as the Phosphoserine intermediate. Positions 100, 240, 242, and 244 each coordinate Mg(2+). Ser-100 carries the post-translational modification Phosphoserine.

Belongs to the phosphohexose mutase family. The cofactor is Mg(2+). In terms of processing, activated by phosphorylation.

The catalysed reaction is alpha-D-glucosamine 1-phosphate = D-glucosamine 6-phosphate. Functionally, catalyzes the conversion of glucosamine-6-phosphate to glucosamine-1-phosphate. The chain is Phosphoglucosamine mutase from Clostridium botulinum (strain Eklund 17B / Type B).